An 888-amino-acid chain; its full sequence is Interference hedgehog (888 aa).

A signal peptide spans 1-24; the sequence is MSLTRFSLCLLLTLLLAAIPVYLA. The Extracellular segment spans residues 25–688; that stretch reads SPDPGVRILR…SHNETFNLNP (664 aa). 4 consecutive Ig-like C2-type domains span residues 28–123, 134–215, 234–321, and 327–414; these read PGVR…ARLE, EGFK…VRLA, PHLL…SIQL, and PRIV…LQVN. Intrachain disulfides connect C51–C106, C155–C203, and C257–C305. 8 N-linked (GlcNAc...) asparagine glycosylation sites follow: N80, N185, N192, N281, N336, N365, N369, and N455. Residues C348 and C396 are joined by a disulfide bond. Fibronectin type-III domains are found at residues 450–557 and 565–660; these read PPSA…LQRG and VPSL…TQRP. 2 residues coordinate heparin: R486 and K493. Residue N516 is glycosylated (N-linked (GlcNAc...) asparagine). R531 contacts heparin. N-linked (GlcNAc...) asparagine glycosylation occurs at N547. Over residues 655-667 the composition is skewed to polar residues; it reads GRTQRPRVSTTTE. The segment at 655-679 is disordered; it reads GRTQRPRVSTTTEPAVHAMDTTTPS. A glycan (N-linked (GlcNAc...) asparagine) is linked at N681. A helical membrane pass occupies residues 689 to 709; that stretch reads LLTGTIGGGALLVLLVVSACL. Residues 710-888 are Cytoplasmic-facing; sequence CLCRRRSSRG…SSGSLNSVGV (179 aa). 3 disordered regions span residues 759–789, 812–864, and 869–888; these read AQQQQQQQQQQQQQQQQQHEEKDTQDNDMSY, SSSL…PGRV, and ARLSSRSENLSSGSLNSVGV. Residues 760–775 show a composition bias toward low complexity; that stretch reads QQQQQQQQQQQQQQQQ. Polar residues predominate over residues 843-859; that stretch reads QPTDGSTADSPRLQASN. Positions 872 to 888 are enriched in low complexity; sequence SSRSENLSSGSLNSVGV.

It belongs to the immunoglobulin superfamily. IHOG family. In terms of assembly, homodimer. Heterotetramer; 2 iHog chains bind 2 hh chains when facilitated by heparin, heparin is required to promote high-affinity interactions between hh and iHog.

It localises to the membrane. Mediates response to the active Hedgehog (Hh) protein signal in embryos, functioning upstream or at the level of patched (ptc). This Drosophila grimshawi (Hawaiian fruit fly) protein is Interference hedgehog.